Reading from the N-terminus, the 149-residue chain is 3-dehydroquinate dehydratase (149 aa).

Catalysis depends on Y23, which acts as the Proton acceptor. Residues N75, H81, and D88 each contribute to the substrate site. The active-site Proton donor is the H101. Substrate contacts are provided by residues 102 to 103 and R112; that span reads LS.

The protein belongs to the type-II 3-dehydroquinase family. Homododecamer.

The enzyme catalyses 3-dehydroquinate = 3-dehydroshikimate + H2O. Its pathway is metabolic intermediate biosynthesis; chorismate biosynthesis; chorismate from D-erythrose 4-phosphate and phosphoenolpyruvate: step 3/7. Catalyzes a trans-dehydration via an enolate intermediate. The polypeptide is 3-dehydroquinate dehydratase (Stenotrophomonas maltophilia (strain R551-3)).